A 371-amino-acid chain; its full sequence is Gustatory and pheromone receptor 39a, isoform A (371 aa).

Over 1 to 41 the chain is Cytoplasmic; that stretch reads MSKVCRDLRIYLRLLHIMGMMCWHFDSDHCQLVATSGSERY. A helical membrane pass occupies residues 42–62; the sequence is AVVYAGCILVSTTAGFIFALL. Residues 63–80 are Extracellular-facing; it reads HPSRFHIAIYNQTGNFYE. The N-linked (GlcNAc...) asparagine glycan is linked to asparagine 73. Residues 81-101 form a helical membrane-spanning segment; it reads AVIFRSTCVVLFLVYVILYAW. Topologically, residues 102–127 are cytoplasmic; sequence RHRYRDLVQHILRLNRRCASSCTNQQ. Residues 128-148 form a helical membrane-spanning segment; sequence FLHNIILYGMLTILCFGNYLH. Topologically, residues 149-161 are extracellular; sequence GYTRAGLATLPLA. A helical transmembrane segment spans residues 162–182; that stretch reads LCMLVYIFAFLVLCLLLMFFV. Topologically, residues 183 to 228 are cytoplasmic; that stretch reads SLKQVMTAGLIHYNQQLCQGDLISGLRGRQQILKLCGGELNECFGL. A helical transmembrane segment spans residues 229-249; that stretch reads LMLPIVALVLLMAPSGPFFLI. At 250-263 the chain is on the extracellular side; the sequence is STVLEGKFRPDECL. The chain crosses the membrane as a helical span at residues 264-284; sequence IMLLTSSTWDTPWMIMLVLML. Topologically, residues 285–340 are cytoplasmic; sequence RTNGISEEANKTAKMLTKVPRTGTGLDRMIEKFLLKNLRQKPILTAYGFFALDKST. The helical transmembrane segment at 341–361 threads the bilayer; sequence LFKLFTAIFTYMVILVQFKEM. Over 362 to 371 the chain is Extracellular; the sequence is ENSTKSINKF. Asparagine 363 is a glycosylation site (N-linked (GlcNAc...) asparagine).

This sequence belongs to the insect chemoreceptor superfamily. Gustatory receptor (GR) family. Gr21a subfamily. Expressed in the adult labellar chemosensory neurons, and adult thorax and wing. In larvae, is expressed in neurons of the posterior pharyngeal sense organ.

The protein localises to the cell membrane. In terms of biological role, gustatory receptor which mediates acceptance or avoidance behavior, depending on its substrates. Plays a role in sustaining courtship behavior in males, possibly through the reception of a stimulating arrestant pheromone. The polypeptide is Gustatory and pheromone receptor 39a, isoform A (Gr39a) (Drosophila melanogaster (Fruit fly)).